The following is a 156-amino-acid chain: Large ribosomal subunit protein uL15 (156 aa).

The interval 25–49 is disordered; that stretch reads RGIGCGKGKTSGRGHKGQKARSGTS. Residues 34-43 show a composition bias toward basic residues; that stretch reads TSGRGHKGQK.

Belongs to the universal ribosomal protein uL15 family. As to quaternary structure, part of the 50S ribosomal subunit.

Binds to the 23S rRNA. The protein is Large ribosomal subunit protein uL15 of Wolbachia sp. subsp. Brugia malayi (strain TRS).